Consider the following 113-residue polypeptide: Large ribosomal subunit protein bL19 (113 aa).

It belongs to the bacterial ribosomal protein bL19 family.

In terms of biological role, this protein is located at the 30S-50S ribosomal subunit interface and may play a role in the structure and function of the aminoacyl-tRNA binding site. The chain is Large ribosomal subunit protein bL19 from Corynebacterium glutamicum (strain R).